A 389-amino-acid chain; its full sequence is Tyrosine aminotransferase (389 aa).

The residue at position 242 (Lys242) is an N6-(pyridoxal phosphate)lysine.

It belongs to the class-I pyridoxal-phosphate-dependent aminotransferase family. In terms of assembly, homodimer. Pyridoxal 5'-phosphate serves as cofactor.

The catalysed reaction is L-tyrosine + 2-oxoglutarate = 3-(4-hydroxyphenyl)pyruvate + L-glutamate. It participates in amino-acid degradation; L-phenylalanine degradation; acetoacetate and fumarate from L-phenylalanine: step 2/6. Functionally, transaminase involved in tyrosine breakdown. Converts tyrosine to p-hydroxyphenylpyruvate. The chain is Tyrosine aminotransferase (tatA) from Rhizobium meliloti (strain 1021) (Ensifer meliloti).